Here is a 379-residue protein sequence, read N- to C-terminus: Synaptic vesicle membrane protein VAT-1 (379 aa).

At serine 273 the chain carries Phosphoserine.

The protein belongs to the zinc-containing alcohol dehydrogenase family. Quinone oxidoreductase subfamily. In terms of tissue distribution, cholinergic synaptic vesicles.

Its subcellular location is the cytoplasmic vesicle. It localises to the secretory vesicle. The protein localises to the synaptic vesicle membrane. Functionally, may play a central role in the functions mediated by specific classes of synaptic vesicles. This chain is Synaptic vesicle membrane protein VAT-1, found in Tetronarce californica (Pacific electric ray).